We begin with the raw amino-acid sequence, 220 residues long: Uracil-DNA glycosylase (220 aa).

The active-site Proton acceptor is the aspartate 60.

It belongs to the uracil-DNA glycosylase (UDG) superfamily. UNG family.

It localises to the cytoplasm. It carries out the reaction Hydrolyzes single-stranded DNA or mismatched double-stranded DNA and polynucleotides, releasing free uracil.. Functionally, excises uracil residues from the DNA which can arise as a result of misincorporation of dUMP residues by DNA polymerase or due to deamination of cytosine. The polypeptide is Uracil-DNA glycosylase (Francisella tularensis subsp. holarctica (strain FTNF002-00 / FTA)).